Reading from the N-terminus, the 394-residue chain is Elongation factor Tu 1 (394 aa).

In terms of domain architecture, tr-type G spans 10-204 (KPHVNVGTIG…ALDSYIPQPE (195 aa)). A G1 region spans residues 19 to 26 (GHVDHGKT). 19 to 26 (GHVDHGKT) contacts GTP. A Mg(2+)-binding site is contributed by Thr-26. The tract at residues 60-64 (GITIN) is G2. The segment at 81 to 84 (DCPG) is G3. Residues 81–85 (DCPGH) and 136–139 (NKCD) contribute to the GTP site. A G4 region spans residues 136-139 (NKCD). The G5 stretch occupies residues 174 to 176 (SAL).

Belongs to the TRAFAC class translation factor GTPase superfamily. Classic translation factor GTPase family. EF-Tu/EF-1A subfamily. Monomer.

The protein resides in the cytoplasm. The enzyme catalyses GTP + H2O = GDP + phosphate + H(+). Its function is as follows. GTP hydrolase that promotes the GTP-dependent binding of aminoacyl-tRNA to the A-site of ribosomes during protein biosynthesis. The sequence is that of Elongation factor Tu 1 from Yersinia pestis bv. Antiqua (strain Nepal516).